Consider the following 299-residue polypeptide: MLRLFYFSAIIASVILNFVGIIMNLFITVVNCKTWVKSHRISSSDRILFSLGITRFLMLGLFLVNTIYFVSSNXERSVYLSAFFVLCFMFLDSSSLWFVTLLNILYCVKITNFQHSVFLLLKRNISPKIPRLLLACVLISAFTTCLYITLSQASPFPELVTTRNNTSFNINEGILSLVVSLVLSSSLQFIINVTSASLLIHSLRRHIQKMQKNATGFWNPQTEAHVGAMKLMVYFLILYIPYSVATLVQYLPFYAGMDMGTKSICLIFATLYSPGHSVLIIITHPKLKTTAKKILCFKK.

The Extracellular segment spans residues 1 to 9; it reads MLRLFYFSA. The helical transmembrane segment at 10 to 30 threads the bilayer; it reads IIASVILNFVGIIMNLFITVV. Topologically, residues 31–46 are cytoplasmic; the sequence is NCKTWVKSHRISSSDR. A helical membrane pass occupies residues 47–67; sequence ILFSLGITRFLMLGLFLVNTI. Over 68–81 the chain is Extracellular; sequence YFVSSNXERSVYLS. The helical transmembrane segment at 82–102 threads the bilayer; the sequence is AFFVLCFMFLDSSSLWFVTLL. At 103-131 the chain is on the cytoplasmic side; sequence NILYCVKITNFQHSVFLLLKRNISPKIPR. Residues 132–152 traverse the membrane as a helical segment; that stretch reads LLLACVLISAFTTCLYITLSQ. Residues 153–172 lie on the Extracellular side of the membrane; it reads ASPFPELVTTRNNTSFNINE. Residues Asn-164 and Asn-165 are each glycosylated (N-linked (GlcNAc...) asparagine). The chain crosses the membrane as a helical span at residues 173 to 193; that stretch reads GILSLVVSLVLSSSLQFIINV. At 194–230 the chain is on the cytoplasmic side; sequence TSASLLIHSLRRHIQKMQKNATGFWNPQTEAHVGAMK. The helical transmembrane segment at 231-251 threads the bilayer; the sequence is LMVYFLILYIPYSVATLVQYL. Over 252–262 the chain is Extracellular; it reads PFYAGMDMGTK. Residues 263–283 traverse the membrane as a helical segment; that stretch reads SICLIFATLYSPGHSVLIIIT. Topologically, residues 284–299 are cytoplasmic; that stretch reads HPKLKTTAKKILCFKK.

This sequence belongs to the G-protein coupled receptor T2R family.

Its subcellular location is the membrane. It is found in the cell projection. The protein resides in the cilium membrane. In terms of biological role, gustducin-coupled receptor implicated in the perception of bitter compounds in the oral cavity and the gastrointestinal tract. Signals through PLCB2 and the calcium-regulated cation channel TRPM5. In airway epithelial cells, binding of denatonium increases the intracellular calcium ion concentration and stimulates ciliary beat frequency. The sequence is that of Taste receptor type 2 member 4 (TAS2R4) from Pan troglodytes (Chimpanzee).